The sequence spans 472 residues: Forkhead box protein H1 (472 aa).

Positions 36–56 are disordered; that stretch reads SSKRSCHRSSNPLLELGGRLD. The fork-head DNA-binding region spans 97-193; it reads KPPYSYLAMI…LKRQNTAVSR (97 aa). Disordered stretches follow at residues 211–246 and 261–360; these read YSQP…RPKL and PASS…LPTS. Residues 219–239 show a composition bias toward pro residues; it reads PLPPESSLPPVPTRQSPPPSE. Positions 294–310 are enriched in low complexity; the sequence is ASYNGSSSASSVSPASD. The tract at residues 339–465 is SMAD-interaction domain (SID); it reads SCPPPNKSSK…PNQYALQNGP (127 aa). Positions 357 to 361 match the Fast/FoxH1 motif 1 (FM1) motif; sequence LPTSY. Residues 367–373 carry the Fast/FoxH1 motif 2 (FM2) motif; that stretch reads PNAVAPP. The SMAD interaction motif (SIM) signature appears at 428–448; it reads LDSMLQSVPPNKSVFDALGSN.

The protein resides in the nucleus. In terms of biological role, transcriptional activator. Activates an activin response element (ARE). Recognizes and binds to the DNA sequence 5'-TGT[GT][GT]ATT-3'. Modulator of nodal signaling required for organizer formation. Also required for the development of dorsal axial structures and left-right symmetry. In Danio rerio (Zebrafish), this protein is Forkhead box protein H1 (foxh1).